Reading from the N-terminus, the 100-residue chain is uncharacterized protein (100 aa).

The segment covering 68 to 91 has biased composition (basic and acidic residues); that stretch reads EQYASGAGEKRKEQSSGNSRRKDP. A disordered region spans residues 68–100; the sequence is EQYASGAGEKRKEQSSGNSRRKDPSLYNWSDVK.

It belongs to the chlamydial CPn_0121/CT_031/TC_0300 family.

This is an uncharacterized protein from Chlamydia muridarum (strain MoPn / Nigg).